The chain runs to 150 residues: Large ribosomal subunit protein bL9 (150 aa).

The protein belongs to the bacterial ribosomal protein bL9 family.

Binds to the 23S rRNA. The chain is Large ribosomal subunit protein bL9 from Shewanella putrefaciens (strain CN-32 / ATCC BAA-453).